The sequence spans 266 residues: Esterase AGAP003155 (266 aa).

Residues Ser-114, Asp-172, and His-199 each act as charge relay system in the active site. Residues 231-266 are disordered; that stretch reads ATEENSFHLEGQEEAEESALQPVHEGLQNGSDSDSD.

It belongs to the LovG family.

In Anopheles gambiae (African malaria mosquito), this protein is Esterase AGAP003155.